The sequence spans 858 residues: Protein lines (858 aa).

Residues 1-102 form a disordered region; it reads MDTSSAAGSG…NSPTTTPCSS (102 aa). 2 stretches are compositionally biased toward low complexity: residues 20 to 30 and 65 to 102; these read STVATSTTSAS and LDAN…PCSS.

Belongs to the protein lines family. Interacts with drm. In terms of tissue distribution, expressed throughout the embryo, including the hindgut, posterior midgut and embryonic epidermis.

The protein localises to the cytoplasm. It localises to the nucleus. Its function is as follows. Has a dual role as a segment polarity protein and as a modulator of the Abd-B protein. Required for Abd-B to activate the transcription of genes (including ems, cut and sal) that are involved in posterior spiracle morphogenesis. Also required for Abd-B to form an eighth abdominal denticle belt. Acts in a hierarchy downstream of drm and upstream of bowl during foregut and hindgut patterning and morphogenesis. Involved in cell rearrangement during elongation of the embryonic hindgut. Required to regulate expression of embryonic hindgut patterning genes in order to establish the large intestine and at least some rectum, and to repress small intestine fate. Required for late wingless (wg)-dependent cell fate specification in the dorsal embryonic epidermis. Acts in concert with wg to regulate expression of wg itself and also to regulate wg-target genes. May have a role in ventral epidermal patterning, independent of wg signaling. This is Protein lines from Drosophila melanogaster (Fruit fly).